Consider the following 356-residue polypeptide: DNA polymerase IV (356 aa).

One can recognise a UmuC domain in the interval 7 to 188 (IIHIDMDAFY…IPVTKFYGVG (182 aa)). The Mg(2+) site is built by Asp-11 and Asp-106. Glu-107 is a catalytic residue.

The protein belongs to the DNA polymerase type-Y family. As to quaternary structure, monomer. It depends on Mg(2+) as a cofactor.

The protein resides in the cytoplasm. It catalyses the reaction DNA(n) + a 2'-deoxyribonucleoside 5'-triphosphate = DNA(n+1) + diphosphate. Functionally, poorly processive, error-prone DNA polymerase involved in untargeted mutagenesis. Copies undamaged DNA at stalled replication forks, which arise in vivo from mismatched or misaligned primer ends. These misaligned primers can be extended by PolIV. Exhibits no 3'-5' exonuclease (proofreading) activity. May be involved in translesional synthesis, in conjunction with the beta clamp from PolIII. In Listeria monocytogenes serotype 4a (strain HCC23), this protein is DNA polymerase IV.